Consider the following 509-residue polypeptide: tRNA-2-methylthio-N(6)-dimethylallyladenosine synthase (509 aa).

Polar residues predominate over residues 1–15 (MNEQQRLASQQANSS). The disordered stretch occupies residues 1-25 (MNEQQRLASQQANSSTKKEEKDYSK). Basic and acidic residues predominate over residues 16–25 (TKKEEKDYSK). The 119-residue stretch at 66-184 (RKFYIRTYGC…LPYILKDAMF (119 aa)) folds into the MTTase N-terminal domain. Residues Cys-75, Cys-111, Cys-145, Cys-221, Cys-225, and Cys-228 each contribute to the [4Fe-4S] cluster site. The 231-residue stretch at 207–437 (RRGDIKAWVN…NTLVNTLAIE (231 aa)) folds into the Radical SAM core domain. The TRAM domain maps to 440 to 503 (SRYKGQIVEV…TWSLNGELVE (64 aa)).

This sequence belongs to the methylthiotransferase family. MiaB subfamily. As to quaternary structure, monomer. [4Fe-4S] cluster serves as cofactor.

Its subcellular location is the cytoplasm. The enzyme catalyses N(6)-dimethylallyladenosine(37) in tRNA + (sulfur carrier)-SH + AH2 + 2 S-adenosyl-L-methionine = 2-methylsulfanyl-N(6)-dimethylallyladenosine(37) in tRNA + (sulfur carrier)-H + 5'-deoxyadenosine + L-methionine + A + S-adenosyl-L-homocysteine + 2 H(+). Its function is as follows. Catalyzes the methylthiolation of N6-(dimethylallyl)adenosine (i(6)A), leading to the formation of 2-methylthio-N6-(dimethylallyl)adenosine (ms(2)i(6)A) at position 37 in tRNAs that read codons beginning with uridine. This chain is tRNA-2-methylthio-N(6)-dimethylallyladenosine synthase, found in Bacillus cereus (strain B4264).